A 330-amino-acid chain; its full sequence is Fructose-1,6-bisphosphatase class 1 (330 aa).

Mg(2+) is bound by residues E84, D103, L105, and D106. Residues 106–109 (DGSS), N196, and K262 contribute to the substrate site. Mg(2+) is bound at residue E268.

It belongs to the FBPase class 1 family. In terms of assembly, homotetramer. Requires Mg(2+) as cofactor.

Its subcellular location is the cytoplasm. It catalyses the reaction beta-D-fructose 1,6-bisphosphate + H2O = beta-D-fructose 6-phosphate + phosphate. The protein operates within carbohydrate biosynthesis; gluconeogenesis. This Shewanella baltica (strain OS185) protein is Fructose-1,6-bisphosphatase class 1.